A 144-amino-acid polypeptide reads, in one-letter code: Large ribosomal subunit protein uL15 (144 aa).

The tract at residues 1 to 52 (MYLNTISPMKKSNHSSKRKGRGIGSGKGKTSGRGHKGQRSRSGGKVRRGFEG) is disordered. 2 stretches are compositionally biased toward basic residues: residues 11–21 (KSNHSSKRKGR) and 30–47 (TSGRGHKGQRSRSGGKVR).

This sequence belongs to the universal ribosomal protein uL15 family. As to quaternary structure, part of the 50S ribosomal subunit.

Functionally, binds to the 23S rRNA. In Wigglesworthia glossinidia brevipalpis, this protein is Large ribosomal subunit protein uL15.